Reading from the N-terminus, the 129-residue chain is Small ribosomal subunit protein uS11 (129 aa).

It belongs to the universal ribosomal protein uS11 family. In terms of assembly, part of the 30S ribosomal subunit. Interacts with proteins S7 and S18. Binds to IF-3.

Located on the platform of the 30S subunit, it bridges several disparate RNA helices of the 16S rRNA. Forms part of the Shine-Dalgarno cleft in the 70S ribosome. The chain is Small ribosomal subunit protein uS11 from Thermosipho africanus (strain TCF52B).